The chain runs to 102 residues: Death-associated protein 1 (102 aa).

The tract at residues 1-102 (MSSPPEGKLE…RTQHIQQPRK (102 aa)) is disordered. S2 carries the N-acetylserine modification. Position 3 is a phosphoserine; by MTOR (S3). Position 29 is an N6-acetyllysine (K29). The span at 32–43 (HTGDTKEEKDKD) shows a compositional bias: basic and acidic residues. S49 carries the phosphoserine modification. S51 bears the Phosphoserine; by MTOR mark. S91 is modified (phosphoserine). A compositionally biased stretch (polar residues) spans 92 to 102 (PRTQHIQQPRK).

It belongs to the DAP-DAPL1 family. Associates with ribosomes; inhibiting translation. Interacts with eiF5a (EIF5A and EIF5A2); inhibiting translation. Post-translationally, phosphorylated. Phosphorylation by MTOR inhibits the suppressive activity of DAP toward autophagy.

Ribosome-binding protein involved in ribosome hibernation, a process during which ribosomes are stabilized in an inactive state and preserved from proteasomal degradation. Acts via its association with eiF5a (EIF5A and EIF5A2) at the polypeptide exit tunnel of the ribosome, preventing mRNA translation. Involved in ribosome hibernation in the mature oocyte by preventing mRNA translation, leading to ribosome inactivation. Ribosomes, which are produced in large quantities during oogenesis, are stored and translationally repressed in the oocyte and early embryo. Also acts as a negative regulator of autophagy. Involved in mediating interferon-gamma-induced cell death. The chain is Death-associated protein 1 from Homo sapiens (Human).